The chain runs to 170 residues: Large ribosomal subunit protein uL5 (170 aa).

It belongs to the universal ribosomal protein uL5 family. As to quaternary structure, part of the 50S ribosomal subunit; contacts the 5S rRNA and probably tRNA. Forms a bridge to the 30S subunit in the 70S ribosome.

This is one of the proteins that bind and probably mediate the attachment of the 5S RNA into the large ribosomal subunit, where it forms part of the central protuberance. In the 70S ribosome it contacts protein S13 of the 30S subunit (bridge B1b), connecting the 2 subunits; this bridge is implicated in subunit movement. May contact the P site tRNA; the 5S rRNA and some of its associated proteins might help stabilize positioning of ribosome-bound tRNAs. The polypeptide is Large ribosomal subunit protein uL5 (Thermoplasma acidophilum (strain ATCC 25905 / DSM 1728 / JCM 9062 / NBRC 15155 / AMRC-C165)).